Consider the following 152-residue polypeptide: UPF0756 membrane protein CA_C0092 (152 aa).

4 helical membrane-spanning segments follow: residues 5–25, 50–70, 82–102, and 117–137; these read IILV…VAIS, MFWG…QGNV, FVGI…GVGL, and LILG…GPLI.

Belongs to the UPF0756 family.

The protein localises to the cell membrane. The chain is UPF0756 membrane protein CA_C0092 from Clostridium acetobutylicum (strain ATCC 824 / DSM 792 / JCM 1419 / IAM 19013 / LMG 5710 / NBRC 13948 / NRRL B-527 / VKM B-1787 / 2291 / W).